We begin with the raw amino-acid sequence, 538 residues long: Nicotinate phosphoribosyltransferase (538 aa).

Residues tyrosine 21 and threonine 210 each contribute to the nicotinate site. The residue at position 213 (histidine 213) is a Phosphohistidine. Arginine 318 serves as a coordination point for nicotinate. Threonine 380 lines the 5-phospho-alpha-D-ribose 1-diphosphate pocket.

Belongs to the NAPRTase family. In terms of assembly, homodimer. Mg(2+) serves as cofactor. Mn(2+) is required as a cofactor. Transiently phosphorylated on a His residue during the reaction cycle. Phosphorylation strongly increases the affinity for substrates and increases the rate of nicotinate D-ribonucleotide production. Dephosphorylation regenerates the low-affinity form of the enzyme, leading to product release. In terms of tissue distribution, abundantly expressed in the small intestine, liver and kidney.

It is found in the cytoplasm. Its subcellular location is the cytosol. It catalyses the reaction nicotinate + 5-phospho-alpha-D-ribose 1-diphosphate + ATP + H2O = nicotinate beta-D-ribonucleotide + ADP + phosphate + diphosphate. The protein operates within cofactor biosynthesis; NAD(+) biosynthesis; nicotinate D-ribonucleotide from nicotinate: step 1/1. Its function is as follows. Catalyzes the first step in the biosynthesis of NAD from nicotinic acid, the ATP-dependent synthesis of beta-nicotinate D-ribonucleotide from nicotinate and 5-phospho-D-ribose 1-phosphate. Helps prevent cellular oxidative stress via its role in NAD biosynthesis. The protein is Nicotinate phosphoribosyltransferase (Naprt) of Mus musculus (Mouse).